Reading from the N-terminus, the 202-residue chain is Small ribosomal subunit protein uS2 (202 aa).

Belongs to the universal ribosomal protein uS2 family.

The sequence is that of Small ribosomal subunit protein uS2 (rps2) from Pyrococcus horikoshii (strain ATCC 700860 / DSM 12428 / JCM 9974 / NBRC 100139 / OT-3).